We begin with the raw amino-acid sequence, 212 residues long: MSGTLEKVLCLRNNTIFKQAFSLLRFRTSGEKPIYSVGGILLSISRPYKTKPTHGIGKYKHLIKAEEPKKKKGKVEVRAINLGTDYEYGVLNIHLTAYDMTLAESYAQYVHNLCNSLSIKVEESYAMPTKTIEVLQLQDQGSKMLLDSVLTTHERVVQISGLSATFAEIFLEIIQSSLPEGVRLSVKEHTEEDFKGRFKARPELEELLAKLK.

Residues 1–28 constitute a mitochondrion transit peptide; the sequence is MSGTLEKVLCLRNNTIFKQAFSLLRFRT. Lysine 199 bears the N6-succinyllysine mark.

It belongs to the mitochondrion-specific ribosomal protein mL48 family. As to quaternary structure, component of the mitochondrial large ribosomal subunit (mt-LSU). Mature mammalian 55S mitochondrial ribosomes consist of a small (28S) and a large (39S) subunit. The 28S small subunit contains a 12S ribosomal RNA (12S mt-rRNA) and 30 different proteins. The 39S large subunit contains a 16S rRNA (16S mt-rRNA), a copy of mitochondrial valine transfer RNA (mt-tRNA(Val)), which plays an integral structural role, and 52 different proteins. mL48 is located at the central protuberance. Interacts with OXA1L.

The protein localises to the mitochondrion. The sequence is that of Large ribosomal subunit protein mL48 (MRPL48) from Homo sapiens (Human).